A 432-amino-acid polypeptide reads, in one-letter code: Adenylosuccinate synthetase (432 aa).

GTP contacts are provided by residues 12–18 and 40–42; these read GDEGKGK and GHT. Residue Asp-13 is the Proton acceptor of the active site. Mg(2+) is bound by residues Asp-13 and Gly-40. IMP-binding positions include 13–16, 38–41, Thr-130, Arg-144, Gln-225, Thr-240, and Arg-304; these read DEGK and NAGH. His-41 functions as the Proton donor in the catalytic mechanism. 300–306 is a binding site for substrate; the sequence is ATTGRPR. GTP is bound by residues Arg-306, 332–334, and 414–416; these read KLD and SVG.

Belongs to the adenylosuccinate synthetase family. Homodimer. Requires Mg(2+) as cofactor.

The protein localises to the cytoplasm. It carries out the reaction IMP + L-aspartate + GTP = N(6)-(1,2-dicarboxyethyl)-AMP + GDP + phosphate + 2 H(+). It functions in the pathway purine metabolism; AMP biosynthesis via de novo pathway; AMP from IMP: step 1/2. In terms of biological role, plays an important role in the de novo pathway of purine nucleotide biosynthesis. Catalyzes the first committed step in the biosynthesis of AMP from IMP. The sequence is that of Adenylosuccinate synthetase from Anaeromyxobacter dehalogenans (strain 2CP-1 / ATCC BAA-258).